We begin with the raw amino-acid sequence, 631 residues long: Glycosyltransferase-like protein LARGE (631 aa).

Over 1–6 (MQSNYS) the chain is Cytoplasmic. Residues 7-27 (ISYFLLILFTGTSSYFTIWNF) traverse the membrane as a helical; Signal-anchor for type II membrane protein segment. At 28 to 631 (VDHTRVGAFP…TASRLGIKLR (604 aa)) the chain is on the lumenal side. N-linked (GlcNAc...) asparagine glycans are attached at residues asparagine 95, asparagine 105, asparagine 167, asparagine 177, asparagine 287, asparagine 400, asparagine 485, asparagine 502, asparagine 521, asparagine 529, and asparagine 593.

The protein belongs to the glycosyltransferase 8 family.

The protein localises to the golgi apparatus membrane. Functionally, probable glycosyltransferase. The protein is Glycosyltransferase-like protein LARGE (lge-1) of Caenorhabditis elegans.